Reading from the N-terminus, the 238-residue chain is Ribonuclease PH (238 aa).

Phosphate is bound by residues Arg-86 and 124–126; that span reads GTR.

It belongs to the RNase PH family. Homohexameric ring arranged as a trimer of dimers.

It carries out the reaction tRNA(n+1) + phosphate = tRNA(n) + a ribonucleoside 5'-diphosphate. Phosphorolytic 3'-5' exoribonuclease that plays an important role in tRNA 3'-end maturation. Removes nucleotide residues following the 3'-CCA terminus of tRNAs; can also add nucleotides to the ends of RNA molecules by using nucleoside diphosphates as substrates, but this may not be physiologically important. Probably plays a role in initiation of 16S rRNA degradation (leading to ribosome degradation) during starvation. The protein is Ribonuclease PH of Edwardsiella ictaluri (strain 93-146).